The sequence spans 725 residues: Ribosomal RNA large subunit methyltransferase K/L (725 aa).

The region spanning Val-46–Leu-157 is the THUMP domain.

It belongs to the methyltransferase superfamily. RlmKL family.

It localises to the cytoplasm. The enzyme catalyses guanosine(2445) in 23S rRNA + S-adenosyl-L-methionine = N(2)-methylguanosine(2445) in 23S rRNA + S-adenosyl-L-homocysteine + H(+). It carries out the reaction guanosine(2069) in 23S rRNA + S-adenosyl-L-methionine = N(2)-methylguanosine(2069) in 23S rRNA + S-adenosyl-L-homocysteine + H(+). In terms of biological role, specifically methylates the guanine in position 2445 (m2G2445) and the guanine in position 2069 (m7G2069) of 23S rRNA. The protein is Ribosomal RNA large subunit methyltransferase K/L of Ectopseudomonas mendocina (strain ymp) (Pseudomonas mendocina).